The chain runs to 245 residues: Probable transcriptional regulatory protein Cbei_4222 (245 aa).

It belongs to the TACO1 family.

The protein resides in the cytoplasm. The chain is Probable transcriptional regulatory protein Cbei_4222 from Clostridium beijerinckii (strain ATCC 51743 / NCIMB 8052) (Clostridium acetobutylicum).